Here is a 249-residue protein sequence, read N- to C-terminus: tRNA (guanine-N(1)-)-methyltransferase (249 aa).

S-adenosyl-L-methionine is bound by residues Gly113 and 133–138; that span reads IGDFVL.

This sequence belongs to the RNA methyltransferase TrmD family. Homodimer.

It localises to the cytoplasm. It catalyses the reaction guanosine(37) in tRNA + S-adenosyl-L-methionine = N(1)-methylguanosine(37) in tRNA + S-adenosyl-L-homocysteine + H(+). In terms of biological role, specifically methylates guanosine-37 in various tRNAs. The sequence is that of tRNA (guanine-N(1)-)-methyltransferase from Photobacterium profundum (strain SS9).